A 493-amino-acid polypeptide reads, in one-letter code: Aminotransferase swnA (493 aa).

Belongs to the class-I pyridoxal-phosphate-dependent aminotransferase family. It depends on pyridoxal 5'-phosphate as a cofactor.

It functions in the pathway mycotoxin biosynthesis. Functionally, aminotransferase; part of the gene cluster that mediates the biosynthesis of swainsonine (SW), a cytotoxic fungal alkaloid and a potential cancer therapy drug. Swainsonine production occurs via a multibranched pathway and is dispensable for fungal colonization of plants and infection of insect hosts. The first step of swainsonine biosynthesis is the production of the precursor pipecolic acid (PA) via conversion of L-lysine (Lys) to 1-piperideine-6-carboxylate (P6C) by the aminotransferase swnA, the latter being further reduced to PA by the reductase swnR. The PKS-NRPS hybrid synthetase swnK uptakes and condensates PA and malonyl-CoA with and without skipping of the ketoreductase (KR) domain in order to produce 3 intermediates, 1-oxoindolizidine, (1S)-1-hydroxyindolizin, and (1R)-1-hydroxyindolizine; with the transisomer (1S)-1-hydroxyindolizin being predominant. The terminal thioester reductase (TE) domain of swnK is involved in reduction of the thioester bond to release the intermediate aldehydes. The oxidoreductase swnN could contribute to the reduction of 1-oxoindolizidine to (1S)-1-hydroxyindolizin and (1R)-1-hydroxyindolizine, contributing to the major route of SW production. The dioxygenase swnH2 would be responsible for the oxidization of (1R)-1-hydroxyindolizine into (1R,2S)-1,2-dihydroxyindolizine and of (1S)-1-hydroxyindolizin to yield both (1R,2S)-1,2-dihydroxyindolizine and (1S,2S)-1,2-dihydroxyindolizine. The dioxygenase swnH1 then performs the conversion of the 1,2-dihydroxyindolizine epimers to SW. The polypeptide is Aminotransferase swnA (Arthroderma benhamiae (strain ATCC MYA-4681 / CBS 112371) (Trichophyton mentagrophytes)).